The sequence spans 679 residues: Patatin-like phospholipase 1 (679 aa).

2 disordered regions span residues Phe-19 to Asn-45 and Gly-155 to Ser-194. Polar residues-rich tracts occupy residues Tyr-35 to Asn-45 and Thr-162 to Gly-176. Positions Ser-177–Glu-188 are enriched in basic and acidic residues. Positions Leu-338 to Leu-544 constitute a PNPLA domain. The GXSXG motif lies at Gly-381–Gly-385. Ser-383 serves as the catalytic Nucleophile. Asp-531 (proton acceptor) is an active-site residue. The DGA/G motif lies at Asp-531–Ala-533.

Belongs to the patatin family.

The protein resides in the cytoplasm. The enzyme catalyses a 1,2-diacyl-sn-glycero-3-phosphocholine + H2O = a 1-acyl-sn-glycero-3-phosphocholine + a fatty acid + H(+). The catalysed reaction is 1,2-dihexadecanoyl-sn-glycero-3-phosphocholine + H2O = 1-hexadecanoyl-sn-glycero-3-phosphocholine + hexadecanoate + H(+). Functionally, hydrolyzes the ester bond of the fatty acyl group attached at the sn-2 position of phospholipids such as phosphatidylcholine. Involved in gametogenesis; however, it is not clear whether it is involved in gametocytes development in host erythrocytes or in gametocyte activation in the mosquito midgut. Involved in gametocyte development in host erythrocytes; however, not involved in gametocytes activation including male gamete exflagellation. Involved in the rounding up of gametocytes following activation in the mosquito midgut; however, not required for gametocyte development in host erythrocytes. Required for exflagellation of activated male gametocytes. Involved in gametocytes egress from host erythrocytes by promoting the relocalization of perforin-like protein PLP2-containing vesicles to the periphery of gametocytes; PLP2 secretion is required for permeabilization of the erythrocyte membrane and thus, promotes gametocyte egress. Dispensable for asexual blood stage development. The sequence is that of Patatin-like phospholipase 1 from Plasmodium falciparum (isolate NF54).